An 813-amino-acid polypeptide reads, in one-letter code: Ankyrin repeat domain-containing protein SOWAHB (813 aa).

Disordered stretches follow at residues 142–256 (SAAP…QSLS) and 400–436 (ETCG…DSHK). Basic and acidic residues predominate over residues 158–176 (MSEKARVNPSHWDTKRYYP). Over residues 177–189 (EDPPVPDSLPVSP) the composition is skewed to pro residues. The segment covering 191 to 202 (CTNTRQSSFTST) has biased composition (polar residues). Residues 208–244 (HSLSSNNLSSSFSSPESPGLVAKPYNASPSPAGSSPN) are compositionally biased toward low complexity. Positions 245 to 256 (IREQTPKSQSLS) are enriched in polar residues. Acidic residues predominate over residues 400–416 (ETCGSEESDSGEGGDCD). 2 ANK repeats span residues 657-686 (TGYT…KAGI) and 696-726 (NGYT…NVKV).

Belongs to the SOWAH family.

This Xenopus laevis (African clawed frog) protein is Ankyrin repeat domain-containing protein SOWAHB (sowahb).